Reading from the N-terminus, the 395-residue chain is Formate-dependent phosphoribosylglycinamide formyltransferase (395 aa).

N(1)-(5-phospho-beta-D-ribosyl)glycinamide contacts are provided by residues 22-23 (EL) and glutamate 82. Residues arginine 115, lysine 156, 161–166 (SSGKGQ), 196–199 (EGFI), and glutamate 204 each bind ATP. Residues 120–309 (RLAAETLGLP…EFALHARAIL (190 aa)) enclose the ATP-grasp domain. Residues glutamate 268 and glutamate 280 each coordinate Mg(2+). N(1)-(5-phospho-beta-D-ribosyl)glycinamide is bound by residues aspartate 287, lysine 356, and 363 to 364 (RR).

Belongs to the PurK/PurT family. As to quaternary structure, homodimer.

The catalysed reaction is N(1)-(5-phospho-beta-D-ribosyl)glycinamide + formate + ATP = N(2)-formyl-N(1)-(5-phospho-beta-D-ribosyl)glycinamide + ADP + phosphate + H(+). It participates in purine metabolism; IMP biosynthesis via de novo pathway; N(2)-formyl-N(1)-(5-phospho-D-ribosyl)glycinamide from N(1)-(5-phospho-D-ribosyl)glycinamide (formate route): step 1/1. Involved in the de novo purine biosynthesis. Catalyzes the transfer of formate to 5-phospho-ribosyl-glycinamide (GAR), producing 5-phospho-ribosyl-N-formylglycinamide (FGAR). Formate is provided by PurU via hydrolysis of 10-formyl-tetrahydrofolate. The sequence is that of Formate-dependent phosphoribosylglycinamide formyltransferase from Stenotrophomonas maltophilia (strain R551-3).